A 208-amino-acid polypeptide reads, in one-letter code: Uridine kinase (208 aa).

12 to 19 (GGSGGGKT) lines the ATP pocket.

The protein belongs to the uridine kinase family.

It localises to the cytoplasm. It carries out the reaction uridine + ATP = UMP + ADP + H(+). The catalysed reaction is cytidine + ATP = CMP + ADP + H(+). It functions in the pathway pyrimidine metabolism; CTP biosynthesis via salvage pathway; CTP from cytidine: step 1/3. It participates in pyrimidine metabolism; UMP biosynthesis via salvage pathway; UMP from uridine: step 1/1. This Streptococcus pyogenes serotype M3 (strain ATCC BAA-595 / MGAS315) protein is Uridine kinase.